The following is a 184-amino-acid chain: NADH-quinone oxidoreductase subunit B (184 aa).

Residues Cys37, Cys38, Cys103, and Cys132 each contribute to the [4Fe-4S] cluster site.

Belongs to the complex I 20 kDa subunit family. In terms of assembly, NDH-1 is composed of 14 different subunits. Subunits NuoB, C, D, E, F, and G constitute the peripheral sector of the complex. [4Fe-4S] cluster serves as cofactor.

The protein localises to the cell membrane. The enzyme catalyses a quinone + NADH + 5 H(+)(in) = a quinol + NAD(+) + 4 H(+)(out). Its function is as follows. NDH-1 shuttles electrons from NADH, via FMN and iron-sulfur (Fe-S) centers, to quinones in the respiratory chain. The immediate electron acceptor for the enzyme in this species is believed to be a menaquinone. Couples the redox reaction to proton translocation (for every two electrons transferred, four hydrogen ions are translocated across the cytoplasmic membrane), and thus conserves the redox energy in a proton gradient. The polypeptide is NADH-quinone oxidoreductase subunit B (Mycobacterium sp. (strain JLS)).